The sequence spans 103 residues: Histone H4 (103 aa).

Positions 1-14 (MSGRGKGGKGLGKG) are enriched in gly residues. The segment at 1 to 20 (MSGRGKGGKGLGKGGAKRHR) is disordered. Serine 2 bears the N-acetylserine mark. 2 positions are modified to N6-acetyl-N6-methyllysine; alternate: lysine 6 and lysine 13. Lysine 17 carries the post-translational modification N6-acetyllysine. A DNA-binding region spans residues 17–21 (KRHRK). Lysine 21 carries the post-translational modification N6-methyllysine.

The protein belongs to the histone H4 family. As to quaternary structure, the nucleosome is a histone octamer containing two molecules each of H2A, H2B, H3 and H4 assembled in one H3-H4 heterotetramer and two H2A-H2B heterodimers. The octamer wraps approximately 147 bp of DNA.

The protein localises to the nucleus. Its subcellular location is the chromosome. Its function is as follows. Core component of nucleosome. Nucleosomes wrap and compact DNA into chromatin, limiting DNA accessibility to the cellular machineries which require DNA as a template. Histones thereby play a central role in transcription regulation, DNA repair, DNA replication and chromosomal stability. DNA accessibility is regulated via a complex set of post-translational modifications of histones, also called histone code, and nucleosome remodeling. The protein is Histone H4 of Ascaris suum (Pig roundworm).